Consider the following 650-residue polypeptide: MVLTGPPQRESVSMVKRVSMLDQHKKSSCARVRVAVRLRPYMEEKEEDKVPTACVRGLDSHSLEIVNWRNQLETMQYQFDAFYGDSASQREIYMGSVCHILPHLLIGQNASVFAYGPTGAGKTHTMLGNPDQPGVIPRAVRELLQMTRMAASAPENENWTYTITMSYVEIYQEKVMDLLEPKNKDLPIREDKDHNILIPGVTLKTINSFGDFDEHFIPASQNRTVASTKLNDRSSRSHAVLLIKVQKSQQVAPFRQLIGKLYLIDLAGSEDNRRTGNQGIRLKESGAINSSLFTLSKVVDALNQGLPRIPYRDSKLTRLLQDSLGGSAHSVMITNIAPEQTYYFDTLTALNFAAKSKQIINKPFSRETTQTVAQPAMKRPREEAEATTSSRQRKKSKTDSTESSPNSSMESTGKRKLNLASLDSAVVERLLKLDKILTEKGKKEAQLLSTPKRERMALLKKWEESQMEIERLKEKQKELEQKAMEAEARLEKSNNSDLSDSSVSENTFRAPLRGRNTSTAKVKKVLRVLPMQGNSQLQSTIEEGIPVFEKKKKKQVTCDGHENQPTWEMNMRTDLLESGKERILKLLNTGSVKELKSLQRIGDKKAKLIIGWREVNGLFKNVEELECLEGISAKQVSSFIKANILSSISS.

The Kinesin motor domain maps to 31-359 (RVRVAVRLRP…LNFAAKSKQI (329 aa)). 116 to 123 (GPTGAGKT) serves as a coordination point for ATP. The tract at residues 365–416 (SRETTQTVAQPAMKRPREEAEATTSSRQRKKSKTDSTESSPNSSMESTGKRK) is disordered. The segment covering 401–411 (TESSPNSSMES) has biased composition (low complexity). The stretch at 452–498 (KRERMALLKKWEESQMEIERLKEKQKELEQKAMEAEARLEKSNNSDL) forms a coiled coil. The Important for regulated proteolytic degradation motif lies at 560-563 (GHEN).

Belongs to the TRAFAC class myosin-kinesin ATPase superfamily. Kinesin family. Post-translationally, ubiquitinated, leading to its subsequent proteasomal degradation.

It localises to the nucleus. Its subcellular location is the cytoplasm. It is found in the cytoskeleton. Functionally, kinesin family member that is involved in spindle formation and the movements of chromosomes during mitosis and meiosis. Binds to microtubules and to DNA. The sequence is that of Kinesin-like protein KIF22-B (kif22-b) from Xenopus laevis (African clawed frog).